Here is a 34-residue protein sequence, read N- to C-terminus: Photosystem I reaction center subunit XII (34 aa).

A helical transmembrane segment spans residues 10–32; the sequence is IYIALVVAAHAAILALRLSVSLY.

Belongs to the PsaM family.

Its subcellular location is the cellular thylakoid membrane. This is Photosystem I reaction center subunit XII from Synechococcus sp. (strain RCC307).